The primary structure comprises 316 residues: Acetyl-coenzyme A carboxylase carboxyl transferase subunit alpha (316 aa).

The region spanning 39–293 is the CoA carboxyltransferase C-terminal domain; the sequence is RLQDKSESLT…REQLNSQLHM (255 aa).

Belongs to the AccA family. In terms of assembly, acetyl-CoA carboxylase is a heterohexamer composed of biotin carboxyl carrier protein (AccB), biotin carboxylase (AccC) and two subunits each of ACCase subunit alpha (AccA) and ACCase subunit beta (AccD).

It localises to the cytoplasm. The enzyme catalyses N(6)-carboxybiotinyl-L-lysyl-[protein] + acetyl-CoA = N(6)-biotinyl-L-lysyl-[protein] + malonyl-CoA. The protein operates within lipid metabolism; malonyl-CoA biosynthesis; malonyl-CoA from acetyl-CoA: step 1/1. Functionally, component of the acetyl coenzyme A carboxylase (ACC) complex. First, biotin carboxylase catalyzes the carboxylation of biotin on its carrier protein (BCCP) and then the CO(2) group is transferred by the carboxyltransferase to acetyl-CoA to form malonyl-CoA. The sequence is that of Acetyl-coenzyme A carboxylase carboxyl transferase subunit alpha from Stutzerimonas stutzeri (strain A1501) (Pseudomonas stutzeri).